Here is a 134-residue protein sequence, read N- to C-terminus: MADTHHAQGPGKSVLGIGQRIVSIMVEMVETRLRLAVVELEEEKANLFQLLLMLGLTMLFAAFGLMSLMVLIIWAVDPQYRLNAMIATTVVLLLLALIGGIWTLRKSRKSTLLRHTRHELANDRQLLEEESREQ.

The Cytoplasmic portion of the chain corresponds to 1 to 55; sequence MADTHHAQGPGKSVLGIGQRIVSIMVEMVETRLRLAVVELEEEKANLFQLLLMLG. The helical transmembrane segment at 56-76 threads the bilayer; it reads LTMLFAAFGLMSLMVLIIWAV. The Periplasmic portion of the chain corresponds to 77 to 83; the sequence is DPQYRLN. Residues 84 to 104 traverse the membrane as a helical segment; sequence AMIATTVVLLLLALIGGIWTL. The Cytoplasmic portion of the chain corresponds to 105–134; it reads RKSRKSTLLRHTRHELANDRQLLEEESREQ.

Its subcellular location is the cell inner membrane. The protein is Inner membrane protein YqjE (yqjE) of Escherichia coli O157:H7.